The following is a 131-amino-acid chain: Transcription antitermination protein NusB (131 aa).

Belongs to the NusB family.

In terms of biological role, involved in transcription antitermination. Required for transcription of ribosomal RNA (rRNA) genes. Binds specifically to the boxA antiterminator sequence of the ribosomal RNA (rrn) operons. This chain is Transcription antitermination protein NusB, found in Bacillus subtilis (strain 168).